A 273-amino-acid chain; its full sequence is 2,3,4,5-tetrahydropyridine-2,6-dicarboxylate N-succinyltransferase (273 aa).

Residues Arg-105 and Asp-142 each coordinate substrate.

This sequence belongs to the transferase hexapeptide repeat family. As to quaternary structure, homotrimer.

Its subcellular location is the cytoplasm. It catalyses the reaction (S)-2,3,4,5-tetrahydrodipicolinate + succinyl-CoA + H2O = (S)-2-succinylamino-6-oxoheptanedioate + CoA. The protein operates within amino-acid biosynthesis; L-lysine biosynthesis via DAP pathway; LL-2,6-diaminopimelate from (S)-tetrahydrodipicolinate (succinylase route): step 1/3. The sequence is that of 2,3,4,5-tetrahydropyridine-2,6-dicarboxylate N-succinyltransferase from Bordetella avium (strain 197N).